A 650-amino-acid polypeptide reads, in one-letter code: Serine/threonine-protein kinase oca2 (650 aa).

Residues 1–14 (MSVTPPNVQFNLNG) show a composition bias toward polar residues. 2 disordered regions span residues 1–210 (MSVT…PHDI) and 222–288 (HHGK…KSSA). Serine 72 bears the Phosphoserine mark. A compositionally biased stretch (basic and acidic residues) spans 78-98 (NHIDPKLAEDRYRSSAARHFE). Positions 140–154 (PSGSTGYTSPALSQN) are enriched in polar residues. Basic residues-rich tracts occupy residues 222–231 (HHGKHGHHGH) and 245–257 (HDKHDKHDKHEKH). A compositionally biased stretch (basic and acidic residues) spans 258–279 (HSSLDLRRFFKSHQKTDKEKKP). Serine 286 is modified (phosphoserine). Residues 302–614 (GKFGRMLGSG…IHRVFADNWI (313 aa)) form the Protein kinase domain. ATP is bound by residues 308-316 (LGSGAGGSV) and lysine 331. The Proton acceptor role is filled by aspartate 425. The interval 549 to 570 (PIRKTDESHSPNSKTDNSSTHK) is disordered.

The protein belongs to the protein kinase superfamily. Ser/Thr protein kinase family.

It is found in the cytoplasm. The enzyme catalyses L-seryl-[protein] + ATP = O-phospho-L-seryl-[protein] + ADP + H(+). The catalysed reaction is L-threonyl-[protein] + ATP = O-phospho-L-threonyl-[protein] + ADP + H(+). Functionally, overexpression causes cell cycle arrest. This chain is Serine/threonine-protein kinase oca2, found in Schizosaccharomyces pombe (strain 972 / ATCC 24843) (Fission yeast).